Consider the following 581-residue polypeptide: Interleukin-22 receptor subunit alpha-1 (581 aa).

Positions 1-15 (MRTLLTILAAGSLLA) are cleaved as a signal peptide. Residues 16-228 (HITEDTSDLL…VKTLPDRTWT (213 aa)) are Extracellular-facing. 2 consecutive Fibronectin type-III domains span residues 18–115 (TEDT…RFSS) and 141–221 (PTYT…RVKT). A disulfide bond links Cys71 and Cys79. An N-linked (GlcNAc...) asparagine glycan is attached at Asn80. Cys128 and Cys217 are disulfide-bonded. The chain crosses the membrane as a helical span at residues 229 to 249 (YSFSGAFLFSLGFLVAGLCYL). At 250–581 (SYRYITKPPP…GLALTVQWES (332 aa)) the chain is on the cytoplasmic side. 2 disordered regions span residues 354 to 493 (QAAP…SSLK) and 539 to 563 (PSDEDPVSKTEAESPGLQAPDLESP). The span at 378 to 389 (TPQAVSETQLPS) shows a compositional bias: polar residues. Residues Ser410 and Ser414 each carry the phosphoserine modification. Over residues 440–449 (CSPTGLSLQE) the composition is skewed to polar residues.

This sequence belongs to the type II cytokine receptor family. Heterodimer with IL10RB and with IL20RB. Interacts with FBXW12; the interaction promotes ubiquitination of IL22RA1. Post-translationally, ubiquitinated.

Its subcellular location is the cell membrane. Component of the receptor for IL20, IL22 and IL24. Component of IL22 receptor formed by IL22RA1 and IL10RB enabling IL22 signaling via JAK/STAT pathways. IL22 also induces activation of MAPK1/MAPK3 and Akt kinases pathways. Component of one of the receptor for IL20 and IL24 formed by IL22RA1 and IL20RB also signaling through STATs activation. Mediates IL24 antiangiogenic activity as well as IL24 inhibitory effect on endothelial cell tube formation and differentiation. The sequence is that of Interleukin-22 receptor subunit alpha-1 (IL22RA1) from Bos taurus (Bovine).